The following is a 3704-amino-acid chain: Fatty acid synthase 2 (3704 aa).

The segment covering 27–41 has biased composition (low complexity); the sequence is AVSAHGSPPSSASPG. The tract at residues 27-52 is disordered; that stretch reads AVSAHGSPPSSASPGPDDKAFSVDGT. Residues 216–475 are acetyltransferase (AT) domain; sequence ALFGGQGNNH…QARIPFSKRK (260 aa). Positions 639-887 are enoyl reductase (ER) domain; the sequence is SRLLGKPPIM…LIASTQGCSD (249 aa). Residues 1216–1709 form a dehydratase (DH) domain region; the sequence is GEQPSWIRAL…VPGDQLSVQL (494 aa). The 107-residue stretch at 1624-1730 folds into the MaoC-like domain; it reads PKTNEPYSRA…VQIDASNQRG (107 aa). The interval 1747-2112 is malonyl/palmitoyl transferase (MT/PT) domain; that stretch reads YVFTGQGSQA…IEHVSEVTRS (366 aa). In terms of domain architecture, Carrier spans 2265–2343; that stretch reads DERLDPLLTV…AALRPGYSGE (79 aa). At Ser2303 the chain carries O-(pantetheine 4'-phosphoryl)serine. The tract at residues 2733–2969 is ketoreductase (KR) domain; that stretch reads GLDVLLTGVG…LGLVEPEFAS (237 aa). Residues 3176-3623 form the Ketosynthase family 3 (KS3) domain; that stretch reads QQEIELTHDL…QVGGIAMILH (448 aa). Catalysis depends on for beta-ketoacyl synthase activity residues Cys3359, His3506, and His3547.

It in the N-terminal section; belongs to the fungal fatty acid synthetase subunit beta family. In the C-terminal section; belongs to the thiolase-like superfamily. Fungal fatty acid synthetase subunit alpha family.

The protein operates within secondary metabolite biosynthesis. Functionally, fatty acid synthase; part of the gene cluster that mediates the biosynthesis of the glycolipid biosurfactant ustilagic acid (UA). UA is a secreted cellobiose glycolipid that is toxic for many microorganisms and confers biocontrol activity to U.maydis. UA consists of 15,16-dihydroxypalmitic or 2,15,16-trihydroxypalmitic acid, which is O-glycosidically linked to cellobiose at its terminal hydroxyl group. In addition, the cellobiose moiety is acetylated and acylated with a short-chain hydroxy fatty acid. UA biosynthesis starts with omega-hydroxylation of palmitic acid catalyzed by the cytochrome P450 monooxygenase cyp1. Terminal hydroxylation of palmitic acid precedes subterminal hydroxylation catalyzed by the cytochrome P450 monooxygenase cyp2. Sequential glucosylation of the hydroxy fatty acid is probably catalyzed by the glycosyltransferase ugt1. The cellobiose lipid is further decorated by acetylation of the proximal glucose residue and by acylation with a short-chain beta-hydroxy fatty acid at the distal glucose residue. The acyltransferase uat1 may be a good candidate for catalyzing either acetylation or acylation of the cellobiose lipid. The fatty acid synthase fas2 may be involved in synthesis of the carbon backbone of the short-chain beta-hydroxy fatty acid esterified to the cellobiose disaccharide. The secreted UA consists of a mixture of both alpha-hydroxylated and non-hydroxylated glycolipids; therefore, alpha-hydroxylation of the long-chain fatty, catalyzed by the fatty acid hydroxylase ahd1, occurs late in UA biosynthesis and may be the last step before secretion. The chain is Fatty acid synthase 2 from Mycosarcoma maydis (Corn smut fungus).